Here is a 268-residue protein sequence, read N- to C-terminus: UPF0328 protein ECU10_1850 (268 aa).

This sequence belongs to the UPF0328 family.

The chain is UPF0328 protein ECU10_1850 from Encephalitozoon cuniculi (strain GB-M1) (Microsporidian parasite).